A 178-amino-acid chain; its full sequence is Peptide deformylase (178 aa).

The Fe cation site is built by Cys-92 and His-134. Glu-135 is a catalytic residue. His-138 lines the Fe cation pocket.

Belongs to the polypeptide deformylase family. Requires Fe(2+) as cofactor.

The catalysed reaction is N-terminal N-formyl-L-methionyl-[peptide] + H2O = N-terminal L-methionyl-[peptide] + formate. Functionally, removes the formyl group from the N-terminal Met of newly synthesized proteins. Requires at least a dipeptide for an efficient rate of reaction. N-terminal L-methionine is a prerequisite for activity but the enzyme has broad specificity at other positions. In Alkalilimnicola ehrlichii (strain ATCC BAA-1101 / DSM 17681 / MLHE-1), this protein is Peptide deformylase.